Reading from the N-terminus, the 277-residue chain is Small ribosomal subunit protein mS23 (277 aa).

Disordered regions lie at residues 48-85 and 232-277; these read APSH…KKPS and LAAF…GPPI. Residues 244-269 show a composition bias toward acidic residues; that stretch reads ESGESEDEIPLIEEEDAIGASEESET.

Belongs to the mitochondrion-specific ribosomal protein mS23 family. Component of the mitochondrial small ribosomal subunit.

Its subcellular location is the mitochondrion. The protein is Small ribosomal subunit protein mS23 (RSM25) of Ajellomyces capsulatus (strain NAm1 / WU24) (Darling's disease fungus).